The primary structure comprises 207 residues: uncharacterized protein (207 aa).

This is an uncharacterized protein from Bacillus subtilis (strain 168).